Reading from the N-terminus, the 145-residue chain is 3-dehydroquinate dehydratase 1 (145 aa).

Residue Tyr24 is the Proton acceptor of the active site. The substrate site is built by Asn75, His81, and Asp88. His101 functions as the Proton donor in the catalytic mechanism. Substrate is bound by residues 102–103 (IS) and Arg112.

The protein belongs to the type-II 3-dehydroquinase family. As to quaternary structure, homododecamer.

It carries out the reaction 3-dehydroquinate = 3-dehydroshikimate + H2O. Its pathway is metabolic intermediate biosynthesis; chorismate biosynthesis; chorismate from D-erythrose 4-phosphate and phosphoenolpyruvate: step 3/7. Catalyzes a trans-dehydration via an enolate intermediate. This Agrobacterium fabrum (strain C58 / ATCC 33970) (Agrobacterium tumefaciens (strain C58)) protein is 3-dehydroquinate dehydratase 1 (aroQ1).